The chain runs to 405 residues: Elongation factor Tu (405 aa).

The 204-residue stretch at 10–213 (KEHVNVGTIG…AMDEYIPTPE (204 aa)) folds into the tr-type G domain. The interval 19–26 (GHVDHGKS) is G1. Position 19–26 (19–26 (GHVDHGKS)) interacts with GTP. Mg(2+) is bound at residue Ser-26. Residues 64-68 (GITIN) are G2. A G3 region spans residues 85-88 (DCPG). GTP contacts are provided by residues 85–89 (DCPGH) and 140–143 (NKCD). Positions 140–143 (NKCD) are G4. A G5 region spans residues 178–180 (SAL).

The protein belongs to the TRAFAC class translation factor GTPase superfamily. Classic translation factor GTPase family. EF-Tu/EF-1A subfamily. As to quaternary structure, monomer.

The protein resides in the cytoplasm. The enzyme catalyses GTP + H2O = GDP + phosphate + H(+). GTP hydrolase that promotes the GTP-dependent binding of aminoacyl-tRNA to the A-site of ribosomes during protein biosynthesis. The polypeptide is Elongation factor Tu (Aquifex pyrophilus).